A 101-amino-acid chain; its full sequence is NAD(P)H-quinone oxidoreductase subunit 4L, chloroplastic (101 aa).

A run of 3 helical transmembrane segments spans residues 2 to 22 (MLEHVLVLSAYLFSIGIYGLI), 32 to 52 (MCLELILNAVNINLVTFSDLF), and 61 to 81 (IFSIFVIAIAAAEAAIGPAIV).

It belongs to the complex I subunit 4L family. NDH is composed of at least 16 different subunits, 5 of which are encoded in the nucleus.

It localises to the plastid. The protein localises to the chloroplast thylakoid membrane. It catalyses the reaction a plastoquinone + NADH + (n+1) H(+)(in) = a plastoquinol + NAD(+) + n H(+)(out). The enzyme catalyses a plastoquinone + NADPH + (n+1) H(+)(in) = a plastoquinol + NADP(+) + n H(+)(out). In terms of biological role, NDH shuttles electrons from NAD(P)H:plastoquinone, via FMN and iron-sulfur (Fe-S) centers, to quinones in the photosynthetic chain and possibly in a chloroplast respiratory chain. The immediate electron acceptor for the enzyme in this species is believed to be plastoquinone. Couples the redox reaction to proton translocation, and thus conserves the redox energy in a proton gradient. In Illicium oligandrum (Star anise), this protein is NAD(P)H-quinone oxidoreductase subunit 4L, chloroplastic.